We begin with the raw amino-acid sequence, 386 residues long: Na(+)/H(+) antiporter NhaA (386 aa).

A run of 10 helical transmembrane segments spans residues 10 to 30 (EFSIPLLAGVLTALVWANVAP), 45 to 65 (LSFHFVTNDIFMAFFFAIAAV), 84 to 104 (LNPLLATAGGVVGPVGVYLAL), 116 to 136 (GWGIPTATDIAFAWLAARLIF), 142 to 162 (VIAFLLLLAIADDAIGLVIIA), 169 to 189 (VLPVAPPWLMLTAAGMLIAFI), 261 to 281 (IIVDFGLFMFGLANAGVGFSA), 287 to 307 (WLVFCALLFGKVTGIFVFALL), 323 to 343 (HLLVAGIIAGIGFTVALFVAG), and 358 to 378 (GAILSIAVFPVAMAAAKLLGI).

The protein belongs to the NhaA Na(+)/H(+) (TC 2.A.33) antiporter family.

The protein localises to the cell inner membrane. It catalyses the reaction Na(+)(in) + 2 H(+)(out) = Na(+)(out) + 2 H(+)(in). Na(+)/H(+) antiporter that extrudes sodium in exchange for external protons. The sequence is that of Na(+)/H(+) antiporter NhaA from Geotalea uraniireducens (strain Rf4) (Geobacter uraniireducens).